The sequence spans 347 residues: NAD-dependent alcohol dehydrogenase (347 aa).

Residue K11 is modified to N6-methyllysine; partial. Zn(2+) is bound by residues C38, H68, E98, C101, C104, C112, and C154. An N6-methyllysine; partial modification is found at K213.

Belongs to the zinc-containing alcohol dehydrogenase family. In terms of assembly, homodimer and homotetramer. Requires Zn(2+) as cofactor.

It carries out the reaction a primary alcohol + NAD(+) = an aldehyde + NADH + H(+). It catalyses the reaction a secondary alcohol + NAD(+) = a ketone + NADH + H(+). The chain is NAD-dependent alcohol dehydrogenase (adh) from Saccharolobus solfataricus (strain ATCC 35092 / DSM 1617 / JCM 11322 / P2) (Sulfolobus solfataricus).